Reading from the N-terminus, the 117-residue chain is Small ribosomal subunit protein bS6 (117 aa).

Belongs to the bacterial ribosomal protein bS6 family.

Functionally, binds together with bS18 to 16S ribosomal RNA. This chain is Small ribosomal subunit protein bS6, found in Roseobacter denitrificans (strain ATCC 33942 / OCh 114) (Erythrobacter sp. (strain OCh 114)).